Reading from the N-terminus, the 286-residue chain is Probable aquaporin-3 (286 aa).

The interval 1-34 (MADTYGMNGHNGHVKDRRSSSMNGRNRLYAQQEP) is disordered. Residues 1 to 52 (MADTYGMNGHNGHVKDRRSSSMNGRNRLYAQQEPQRTTHLSEFGKHMVAASG) are Cytoplasmic-facing. Residues 53–73 (EFVGTFLFLYFGYAGNIVAVL) traverse the membrane as a helical segment. At 74–87 (QEPISGPNGTLANN) the chain is on the extracellular side. Residues Asn81 and Asn86 are each glycosylated (N-linked (GlcNAc...) asparagine). A helical membrane pass occupies residues 88 to 108 (TVMYIAMAYGFSLLVNVWTFY). Residues 109-135 (RISGGLFNPAVTFGLCLSGQLPWIRAL) lie on the Cytoplasmic side of the membrane. The short motif at 116–118 (NPA) is the NPA 1 element. A helical membrane pass occupies residues 136–156 (FLFPSQIIAAMCAGGLVNAMF). At 157-175 (PGSASIANTTLGPNTSIAQ) the chain is on the extracellular side. N-linked (GlcNAc...) asparagine glycans are attached at residues Asn164 and Asn170. A helical transmembrane segment spans residues 176–196 (GVFLEMFFTAQLVFVVLMLAA). Residues 197-202 (EKSRDT) are Cytoplasmic-facing. A helical membrane pass occupies residues 203–223 (FLAPVGIGLALFVALIPGVFV). Residues 224-244 (TGGSANPVRSFGCAVGSRDFP) are Extracellular-facing. Residues 229 to 231 (NPV) carry the NPA 2 motif. A helical membrane pass occupies residues 245–265 (GYHWIYWVGPLLGAALAAGYF). The Cytoplasmic segment spans residues 266-286 (RLVKMMHYEEANPGQDSPVDV).

It belongs to the MIP/aquaporin (TC 1.A.8) family.

Its subcellular location is the membrane. It catalyses the reaction H2O(in) = H2O(out). Probable water channel that may have redundant functions with FgAQP5. The protein is Probable aquaporin-3 of Gibberella zeae (strain ATCC MYA-4620 / CBS 123657 / FGSC 9075 / NRRL 31084 / PH-1) (Wheat head blight fungus).